The chain runs to 246 residues: Probable phosphatase Tola_0828 (246 aa).

The Zn(2+) site is built by His-8, His-10, His-16, His-41, Glu-74, His-102, His-132, Asp-193, and His-195.

The protein belongs to the PHP family. Zn(2+) is required as a cofactor.

This chain is Probable phosphatase Tola_0828, found in Tolumonas auensis (strain DSM 9187 / NBRC 110442 / TA 4).